The chain runs to 910 residues: Protein translocase subunit SecA (910 aa).

ATP contacts are provided by residues Gln-89, 107–111 (GEGKT), and Asp-496. The disordered stretch occupies residues 873 to 910 (QEFSGGNLNRSQSNGSSVTVTTSSGGGTERKTSRRRKR). The segment covering 876–886 (SGGNLNRSQSN) has biased composition (polar residues).

This sequence belongs to the SecA family. In terms of assembly, monomer and homodimer. Part of the essential Sec protein translocation apparatus which comprises SecA, SecYEG and auxiliary proteins SecDF. Other proteins may also be involved.

The protein resides in the cell inner membrane. The protein localises to the cytoplasm. The enzyme catalyses ATP + H2O + cellular proteinSide 1 = ADP + phosphate + cellular proteinSide 2.. Its function is as follows. Part of the Sec protein translocase complex. Interacts with the SecYEG preprotein conducting channel. Has a central role in coupling the hydrolysis of ATP to the transfer of proteins into and across the cell membrane, serving as an ATP-driven molecular motor driving the stepwise translocation of polypeptide chains across the membrane. The sequence is that of Protein translocase subunit SecA from Leptospira interrogans serogroup Icterohaemorrhagiae serovar copenhageni (strain Fiocruz L1-130).